Consider the following 240-residue polypeptide: Phosphoribosylaminoimidazole-succinocarboxamide synthase (240 aa).

The protein belongs to the SAICAR synthetase family.

The catalysed reaction is 5-amino-1-(5-phospho-D-ribosyl)imidazole-4-carboxylate + L-aspartate + ATP = (2S)-2-[5-amino-1-(5-phospho-beta-D-ribosyl)imidazole-4-carboxamido]succinate + ADP + phosphate + 2 H(+). Its pathway is purine metabolism; IMP biosynthesis via de novo pathway; 5-amino-1-(5-phospho-D-ribosyl)imidazole-4-carboxamide from 5-amino-1-(5-phospho-D-ribosyl)imidazole-4-carboxylate: step 1/2. This Pyrobaculum calidifontis (strain DSM 21063 / JCM 11548 / VA1) protein is Phosphoribosylaminoimidazole-succinocarboxamide synthase.